The following is a 195-amino-acid chain: HTH-type transcriptional regulator BetI (195 aa).

An HTH tetR-type domain is found at 8–68; it reads SIRRRQLIDA…ATMRDITSQL (61 aa). The H-T-H motif DNA-binding region spans 31–50; that stretch reads TIAQIARRAGVSTGIISHYF.

Its pathway is amine and polyamine biosynthesis; betaine biosynthesis via choline pathway [regulation]. Its function is as follows. Repressor involved in the biosynthesis of the osmoprotectant glycine betaine. It represses transcription of the choline transporter BetT and the genes of BetAB involved in the synthesis of glycine betaine. The sequence is that of HTH-type transcriptional regulator BetI from Escherichia coli (strain SMS-3-5 / SECEC).